We begin with the raw amino-acid sequence, 123 residues long: Ribosome-binding factor A (123 aa).

The protein belongs to the RbfA family. In terms of assembly, monomer. Binds 30S ribosomal subunits, but not 50S ribosomal subunits or 70S ribosomes.

The protein resides in the cytoplasm. One of several proteins that assist in the late maturation steps of the functional core of the 30S ribosomal subunit. Associates with free 30S ribosomal subunits (but not with 30S subunits that are part of 70S ribosomes or polysomes). Required for efficient processing of 16S rRNA. May interact with the 5'-terminal helix region of 16S rRNA. In Legionella pneumophila (strain Lens), this protein is Ribosome-binding factor A.